Reading from the N-terminus, the 545-residue chain is Zinc finger protein 697 (545 aa).

Positions Met-1–Trp-143 are disordered. Residue Lys-2 forms a Glycyl lysine isopeptide (Lys-Gly) (interchain with G-Cter in SUMO2) linkage. Acidic residues predominate over residues Asp-23–Glu-36. Over residues Asp-45–Pro-55 the composition is skewed to basic and acidic residues. Composition is skewed to acidic residues over residues Leu-79–Gln-94 and Glu-118–Gln-135. 11 consecutive C2H2-type zinc fingers follow at residues Thr-189–His-211, Phe-261–His-283, Asn-289–His-311, Tyr-317–His-339, Phe-353–His-375, His-381–His-403, Tyr-409–His-431, Tyr-437–His-459, Phe-465–His-487, Tyr-493–His-515, and His-521–His-543.

It belongs to the krueppel C2H2-type zinc-finger protein family.

Its subcellular location is the nucleus. Functionally, RNA-interacting protein with a high number of miRNA targets. Acts as a damage-induced regulator of muscle remodeling by mediating the interferon gamma response in muscle cells. The protein is Zinc finger protein 697 of Homo sapiens (Human).